The chain runs to 111 residues: Magnetosome protein MamF (111 aa).

Residues 1–17 are Cytoplasmic-facing; sequence MAETILIETKTAGGNCR. A helical membrane pass occupies residues 18–38; that stretch reads SYLMAGASYLGILCFVPLLMS. The Lumenal portion of the chain corresponds to 39-50; sequence RDDEYVYFHAKQ. A helical transmembrane segment spans residues 51–71; it reads GLVLWMWSILAMFALHLPGIG. Lys-72 is a topological domain (cytoplasmic). Residues 73 to 93 form a helical membrane-spanning segment; sequence WLFGFSSMGVLMLSVVGLVSV. The Lumenal portion of the chain corresponds to 94–111; sequence ALRRTWRLPLISHVVALI.

Belongs to the magnetosome MamF/MmsF protein family. May form homooligomers. Subject to cleavage or degradation; identified by N-terminal sequencing of proteins that are about 103, 92 and 15 kDa in size.

It localises to the magnetosome membrane. In terms of biological role, plays a role in regulating magnetite crystal size; partially redundant function with MmsF. The sequence is that of Magnetosome protein MamF from Magnetospirillum gryphiswaldense (strain DSM 6361 / JCM 21280 / NBRC 15271 / MSR-1).